The sequence spans 124 residues: Fluoride-specific ion channel FluC (124 aa).

A run of 4 helical transmembrane segments spans residues 5–25 (VYIA…SGLV), 32–52 (SFPY…GLVM), 67–87 (FAIT…SFET), and 96–116 (LLIA…CTWI). Residues G75 and T78 each coordinate Na(+).

The protein belongs to the fluoride channel Fluc/FEX (TC 1.A.43) family.

It is found in the cell inner membrane. The catalysed reaction is fluoride(in) = fluoride(out). Its activity is regulated as follows. Na(+) is not transported, but it plays an essential structural role and its presence is essential for fluoride channel function. In terms of biological role, fluoride-specific ion channel. Important for reducing fluoride concentration in the cell, thus reducing its toxicity. The protein is Fluoride-specific ion channel FluC of Geobacter sp. (strain M21).